The chain runs to 102 residues: ATP-dependent Clp protease adapter protein ClpS (102 aa).

The protein belongs to the ClpS family. Binds to the N-terminal domain of the chaperone ClpA.

In terms of biological role, involved in the modulation of the specificity of the ClpAP-mediated ATP-dependent protein degradation. This is ATP-dependent Clp protease adapter protein ClpS from Shewanella woodyi (strain ATCC 51908 / MS32).